The sequence spans 255 residues: uncharacterized protein (255 aa).

The N-terminal stretch at 1–23 (MKRLNKLVLGIIFLFLVISITAG) is a signal peptide. A lipid anchor (N-palmitoyl cysteine) is attached at Cys24. The S-diacylglycerol cysteine moiety is linked to residue Cys24.

Belongs to the staphylococcal tandem lipoprotein family.

The protein localises to the cell membrane. This is an uncharacterized protein from Staphylococcus aureus (strain USA300).